A 154-amino-acid polypeptide reads, in one-letter code: uncharacterized protein (154 aa).

This is an uncharacterized protein from Bacillus subtilis (strain 168).